Reading from the N-terminus, the 536-residue chain is Proto-oncogene tyrosine-protein kinase Src (536 aa).

Residues 1-53 (MGSNKSKPKDASQRRRSLEPAENVHGAGGGAFPASQTPSKPASADGHRGPSAA) are disordered. Residue Gly2 is the site of N-myristoyl glycine attachment. Positions 7-19 (KPKDASQRRRSLE) are enriched in basic and acidic residues. A Phosphoserine modification is found at Ser17. Position 75 is a phosphoserine; by CDK5 (Ser75). An SH3 domain is found at 84 to 145 (GGVTTFVALY…PSNYVAPSDS (62 aa)). The SH2 domain maps to 151-248 (WYFGKITRRE…GLCHRLTTVC (98 aa)). Tyr187 bears the Phosphotyrosine mark. Residues 270–523 (LRLEVKLGQG…YLQAFLEDYF (254 aa)) enclose the Protein kinase domain. ATP contacts are provided by residues 276 to 284 (LGQGCFGEV) and Lys298. Asp389 acts as the Proton acceptor in catalysis. Tyr419 bears the Phosphotyrosine; by autocatalysis mark. At Tyr419 the chain carries Phosphotyrosine; by FAK2. Phosphotyrosine; by CSK is present on Tyr530.

This sequence belongs to the protein kinase superfamily. Tyr protein kinase family. SRC subfamily. In terms of assembly, part of a complex comprised of PTPRA, BCAR1, BCAR3 (via SH2 domain) and SRC; the formation of the complex is dependent on integrin mediated-tyrosine phosphorylation of PTPRA. Interacts with DDEF1/ASAP1; via the SH3 domain. Interacts with CCPG1. Identified in a complex containing FGFR4, NCAM1, CDH2, PLCG1, FRS2, SRC, SHC1, GAP43 and CTTN. Interacts with ERBB2, STAT1 and PNN. Interacts with DDR1, DDR2 and DAB2. Interacts with CDCP1, TGFB1I1 and TOM1L2. Interacts with the cytoplasmic domain of MUC1, phosphorylates it and increases binding of MUC1 with beta-catenin. Interacts with RALGPS1; via the SH3 domain. Interacts with CAV2 (tyrosine phosphorylated form). Interacts (via the SH3 domain and the protein kinase domain) with ARRB1; the interaction is independent of the phosphorylation state of SRC C-terminus. Interacts with ARRB1 and ARRB2. Interacts with SRCIN1. Interacts with NDFIP2 and more weakly with NDFIP1. Interacts with PIK3CA and/or PIK3C2B, PTK2/FAK1 and ESR1 (dimethylated on arginine). Interacts with FASLG. Interacts (via SH2 domain) with the 'Tyr-402' phosphorylated form of PTK2B/PYK2. Interacts (via SH2 domain) with FLT3 (tyrosine phosphorylated). Interacts with PDGFRA (tyrosine phosphorylated). Interacts with CSF1R. Interacts (via SH2 and SH3 domain) with TNK2. Interacts (via protein kinase domain) with the tyrosine phosphorylated form of RUNX3 (via runt domain). Interacts with TRAF3 (via RING-type zinc finger domain). Interacts with RIGI, MAVS and TBK1. Interacts (via SH2 domain) with RACK1; the interaction is enhanced by tyrosine phosphorylation of RACK1 and inhibits SRC activity. Interacts with EPHB1; activates the MAPK/ERK cascade to regulate cell migration. Interacts with FCAMR. Interacts (via SH2 domain) with the 'Tyr-9' phosphorylated form of PDPK1. Interacts with AMOTL2; this interaction regulates the translocation of phosphorylated SRC to peripheral cell-matrix adhesion sites. Interacts with TRAP1. Interacts with CBLC; the interaction is enhanced when SRC is phosphorylated at Tyr-419. Interacts with ARHGEF5. Interacts (via cytoplasmic domain) with CEACAM1 (via SH2 domain); this interaction is regulated by trans-homophilic cell adhesion. Interacts with MPP2. Interacts with PRR7. Interacts (via kinase domain and to a lesser extent the SH2 domain) directly with PDLIM4; this interaction results in PTPN13-mediated dephosphorylation of this protein leading to its inactivation. Interacts with P85 (PIK3R1 or PIK3R2). Interacts with HNRNPA2B1. Interacts with IL6ST/gp130. Interacts (via SH3 domain) with PELP1 in the presence of 17-beta-estradiol. Interacts with AMBRA1. (Microbial infection) Interacts with HEV ORF3 protein; via the SH3 domain. As to quaternary structure, (Microbial infection) Interacts (via SH2 domain) with HCV non-structural protein 5A (via N-terminus). In terms of processing, myristoylated at Gly-2, and this is essential for targeting to membranes. Dephosphorylated at Tyr-530 by PTPRJ. Phosphorylated on Tyr-530 by c-Src kinase (CSK). The phosphorylated form is termed pp60c-src. Dephosphorylated by PTPRJ at Tyr-419. Normally maintained in an inactive conformation with the SH2 domain engaged with Tyr-530, the SH3 domain engaged with the SH2-kinase linker, and Tyr-419 dephosphorylated. Dephosphorylation of Tyr-530 as a result of protein tyrosine phosphatase (PTP) action disrupts the intramolecular interaction between the SH2 domain and Tyr-530, Tyr-419 can then become autophosphorylated, resulting in SRC activation. Phosphorylation of Tyr-530 by CSK allows this interaction to reform, resulting in SRC inactivation. CDK5-mediated phosphorylation at Ser-75 targets SRC to ubiquitin-dependent degradation and thus leads to cytoskeletal reorganization. Phosphorylated by PTK2/FAK1; this enhances kinase activity. Phosphorylated by PTK2B/PYK2; this enhances kinase activity. Upon activation of IL6ST by IL6, Tyr-419 is phosphorylated and Tyr-530 dephosphorylated. Post-translationally, displays reduced levels of autophosphorylation at Tyr-419 compared to isoforms 2 and 3. In terms of processing, displays enhanced levels of autophosphorylation at Tyr-419 compared to isoform 1. Displays enhanced levels of autophosphorylation at Tyr-419 compared to isoform 1. Shows reduced phosphorylation at Tyr-527 compared to isoforms 1 and 2. Post-translationally, S-nitrosylation is important for activation of its kinase activity. In terms of processing, ubiquitinated in response to CDK5-mediated phosphorylation. Ubiquitination mediated by CBLC requires SRC autophosphorylation at Tyr-419 and may lead to lysosomal degradation. Expressed ubiquitously. Expressed in the skin (at protein level). Platelets, neurons and osteoclasts express 5-fold to 200-fold higher levels than most other tissues. In terms of tissue distribution, expressed in spleen and liver. As to expression, expressed in brain.

The protein resides in the cell membrane. It localises to the mitochondrion inner membrane. Its subcellular location is the nucleus. The protein localises to the cytoplasm. It is found in the cytoskeleton. The protein resides in the perinuclear region. It localises to the cell junction. Its subcellular location is the focal adhesion. The catalysed reaction is L-tyrosyl-[protein] + ATP = O-phospho-L-tyrosyl-[protein] + ADP + H(+). Phosphorylation by CSK at Tyr-530 inhibits kinase activity. Inhibitory phosphorylation at Tyr-530 is enhanced by heme. Further phosphorylation by CDK1 partially reactivates CSK-inactivated SRC and facilitates complete reactivation by protein tyrosine phosphatase PTPRC. Integrin engagement stimulates kinase activity. Phosphorylation by PTK2/FAK1 enhances kinase activity. Butein and pseudosubstrate-based peptide inhibitors like CIYKYYF act as inhibitors. Phosphorylation at Tyr-419 increases kinase activity. In terms of biological role, non-receptor protein tyrosine kinase which is activated following engagement of many different classes of cellular receptors including immune response receptors, integrins and other adhesion receptors, receptor protein tyrosine kinases, G protein-coupled receptors as well as cytokine receptors. Participates in signaling pathways that control a diverse spectrum of biological activities including gene transcription, immune response, cell adhesion, cell cycle progression, apoptosis, migration, and transformation. Due to functional redundancy between members of the SRC kinase family, identification of the specific role of each SRC kinase is very difficult. SRC appears to be one of the primary kinases activated following engagement of receptors and plays a role in the activation of other protein tyrosine kinase (PTK) families. Receptor clustering or dimerization leads to recruitment of SRC to the receptor complexes where it phosphorylates the tyrosine residues within the receptor cytoplasmic domains. Plays an important role in the regulation of cytoskeletal organization through phosphorylation of specific substrates such as AFAP1. Phosphorylation of AFAP1 allows the SRC SH2 domain to bind AFAP1 and to localize to actin filaments. Cytoskeletal reorganization is also controlled through the phosphorylation of cortactin (CTTN). When cells adhere via focal adhesions to the extracellular matrix, signals are transmitted by integrins into the cell resulting in tyrosine phosphorylation of a number of focal adhesion proteins, including PTK2/FAK1 and paxillin (PXN). In addition to phosphorylating focal adhesion proteins, SRC is also active at the sites of cell-cell contact adherens junctions and phosphorylates substrates such as beta-catenin (CTNNB1), delta-catenin (CTNND1), and plakoglobin (JUP). Another type of cell-cell junction, the gap junction, is also a target for SRC, which phosphorylates connexin-43 (GJA1). SRC is implicated in regulation of pre-mRNA-processing and phosphorylates RNA-binding proteins such as KHDRBS1. Phosphorylates PKP3 at 'Tyr-195' in response to reactive oxygen species, which may cause the release of PKP3 from desmosome cell junctions into the cytoplasm. Also plays a role in PDGF-mediated tyrosine phosphorylation of both STAT1 and STAT3, leading to increased DNA binding activity of these transcription factors. Involved in the RAS pathway through phosphorylation of RASA1 and RASGRF1. Plays a role in EGF-mediated calcium-activated chloride channel activation. Required for epidermal growth factor receptor (EGFR) internalization through phosphorylation of clathrin heavy chain (CLTC and CLTCL1) at 'Tyr-1477'. Involved in beta-arrestin (ARRB1 and ARRB2) desensitization through phosphorylation and activation of GRK2, leading to beta-arrestin phosphorylation and internalization. Has a critical role in the stimulation of the CDK20/MAPK3 mitogen-activated protein kinase cascade by epidermal growth factor. Might be involved not only in mediating the transduction of mitogenic signals at the level of the plasma membrane but also in controlling progression through the cell cycle via interaction with regulatory proteins in the nucleus. Plays an important role in osteoclastic bone resorption in conjunction with PTK2B/PYK2. Both the formation of a SRC-PTK2B/PYK2 complex and SRC kinase activity are necessary for this function. Recruited to activated integrins by PTK2B/PYK2, thereby phosphorylating CBL, which in turn induces the activation and recruitment of phosphatidylinositol 3-kinase to the cell membrane in a signaling pathway that is critical for osteoclast function. Promotes energy production in osteoclasts by activating mitochondrial cytochrome C oxidase. Phosphorylates DDR2 on tyrosine residues, thereby promoting its subsequent autophosphorylation. Phosphorylates RUNX3 and COX2 on tyrosine residues, TNK2 on 'Tyr-284' and CBL on 'Tyr-731'. Enhances RIGI-elicited antiviral signaling. Phosphorylates PDPK1 at 'Tyr-9', 'Tyr-373' and 'Tyr-376'. Phosphorylates BCAR1 at 'Tyr-128'. Phosphorylates CBLC at multiple tyrosine residues, phosphorylation at 'Tyr-341' activates CBLC E3 activity. Phosphorylates synaptic vesicle protein synaptophysin (SYP). Involved in anchorage-independent cell growth. Required for podosome formation. Mediates IL6 signaling by activating YAP1-NOTCH pathway to induce inflammation-induced epithelial regeneration. Phosphorylates OTUB1, promoting deubiquitination of RPTOR. Phosphorylates caspase CASP8 at 'Tyr-380' which negatively regulates CASP8 processing and activation, down-regulating CASP8 proapoptotic function. Non-receptor protein tyrosine kinase which phosphorylates synaptophysin with high affinity. Functionally, non-receptor protein tyrosine kinase which shows higher basal kinase activity than isoform 1, possibly due to weakened intramolecular interactions which enhance autophosphorylation of Tyr-419 and subsequent activation. The SH3 domain shows reduced affinity with the linker sequence between the SH2 and kinase domains which may account for the increased basal activity. Displays altered substrate specificity compared to isoform 1, showing weak affinity for synaptophysin and for peptide substrates containing class I or class II SH3 domain-binding motifs. Plays a role in L1CAM-mediated neurite elongation, possibly by acting downstream of L1CAM to drive cytoskeletal rearrangements involved in neurite outgrowth. Its function is as follows. Non-receptor protein tyrosine kinase which shows higher basal kinase activity than isoform 1, possibly due to weakened intramolecular interactions which enhance autophosphorylation of Tyr-419 and subsequent activation. The SH3 domain shows reduced affinity with the linker sequence between the SH2 and kinase domains which may account for the increased basal activity. Displays altered substrate specificity compared to isoform 1, showing weak affinity for synaptophysin and for peptide substrates containing class I or class II SH3 domain-binding motifs. Plays a role in neurite elongation. This Homo sapiens (Human) protein is Proto-oncogene tyrosine-protein kinase Src.